The primary structure comprises 387 residues: WD repeat-containing protein 89 (387 aa).

WD repeat units lie at residues 21–65 (KEPT…VLRE), 68–107 (GYPGLLNGVRFANSCDSVYSACTDGTVKCWDARVAREKPV), 112–156 (GYPS…QDLS), 168–208 (THSD…EEDA), 214–254 (NSIS…TDEP), and 319–358 (GHAATVRSFCWNVQDDSLLTGGEDAQLLLWKPGAIEKTFT).

The sequence is that of WD repeat-containing protein 89 (WDR89) from Pongo abelii (Sumatran orangutan).